The primary structure comprises 283 residues: S-methyl-5'-thioadenosine phosphorylase (283 aa).

T18 is a phosphate binding site. Residue K51 is modified to N6-acetyllysine. Residues 60–61 (RH) and 93–94 (TA) each bind phosphate. Substrate is bound at residue M196. Residue T197 coordinates phosphate. Substrate is bound at residue 220 to 222 (DYD).

It belongs to the PNP/MTAP phosphorylase family. MTAP subfamily. In terms of assembly, homotrimer. In terms of tissue distribution, ubiquitously expressed.

The protein resides in the cytoplasm. It is found in the nucleus. It catalyses the reaction S-methyl-5'-thioadenosine + phosphate = 5-(methylsulfanyl)-alpha-D-ribose 1-phosphate + adenine. Its pathway is amino-acid biosynthesis; L-methionine biosynthesis via salvage pathway; S-methyl-5-thio-alpha-D-ribose 1-phosphate from S-methyl-5'-thioadenosine (phosphorylase route): step 1/1. With respect to regulation, inhibited by 5'-methylthiotubercin and 5'-chloroformycin. In terms of biological role, catalyzes the reversible phosphorylation of S-methyl-5'-thioadenosine (MTA) to adenine and 5-methylthioribose-1-phosphate. Involved in the breakdown of MTA, a major by-product of polyamine biosynthesis. Responsible for the first step in the methionine salvage pathway after MTA has been generated from S-adenosylmethionine. Has broad substrate specificity with 6-aminopurine nucleosides as preferred substrates. The polypeptide is S-methyl-5'-thioadenosine phosphorylase (Homo sapiens (Human)).